Here is a 93-residue protein sequence, read N- to C-terminus: Small ribosomal subunit protein uS19 (93 aa).

It belongs to the universal ribosomal protein uS19 family.

In terms of biological role, protein S19 forms a complex with S13 that binds strongly to the 16S ribosomal RNA. This chain is Small ribosomal subunit protein uS19, found in Helicobacter acinonychis (strain Sheeba).